The following is a 241-amino-acid chain: Lactate utilization protein C (241 aa).

It belongs to the LutC/YkgG family.

In terms of biological role, is involved in L-lactate degradation and allows cells to grow with lactate as the sole carbon source. This Geobacillus sp. (strain WCH70) protein is Lactate utilization protein C.